We begin with the raw amino-acid sequence, 367 residues long: Chorismate synthase (367 aa).

NADP(+)-binding residues include arginine 48 and arginine 54. FMN contacts are provided by residues 125-127 (RSS), 238-239 (NA), glycine 278, 293-297 (KPTSS), and arginine 319.

It belongs to the chorismate synthase family. As to quaternary structure, homotetramer. Requires FMNH2 as cofactor.

It carries out the reaction 5-O-(1-carboxyvinyl)-3-phosphoshikimate = chorismate + phosphate. Its pathway is metabolic intermediate biosynthesis; chorismate biosynthesis; chorismate from D-erythrose 4-phosphate and phosphoenolpyruvate: step 7/7. Catalyzes the anti-1,4-elimination of the C-3 phosphate and the C-6 proR hydrogen from 5-enolpyruvylshikimate-3-phosphate (EPSP) to yield chorismate, which is the branch point compound that serves as the starting substrate for the three terminal pathways of aromatic amino acid biosynthesis. This reaction introduces a second double bond into the aromatic ring system. This is Chorismate synthase from Xanthomonas campestris pv. campestris (strain B100).